The following is a 351-amino-acid chain: Uroporphyrinogen decarboxylase (351 aa).

Substrate-binding positions include 26-30 (RQAGR), aspartate 75, tyrosine 151, serine 206, and histidine 321.

Belongs to the uroporphyrinogen decarboxylase family. Homodimer.

Its subcellular location is the cytoplasm. The catalysed reaction is uroporphyrinogen III + 4 H(+) = coproporphyrinogen III + 4 CO2. Its pathway is porphyrin-containing compound metabolism; protoporphyrin-IX biosynthesis; coproporphyrinogen-III from 5-aminolevulinate: step 4/4. Functionally, catalyzes the decarboxylation of four acetate groups of uroporphyrinogen-III to yield coproporphyrinogen-III. The chain is Uroporphyrinogen decarboxylase from Koribacter versatilis (strain Ellin345).